A 314-amino-acid chain; its full sequence is Methionyl-tRNA formyltransferase (314 aa).

113–116 (SLLP) is a (6S)-5,6,7,8-tetrahydrofolate binding site.

This sequence belongs to the Fmt family.

The catalysed reaction is L-methionyl-tRNA(fMet) + (6R)-10-formyltetrahydrofolate = N-formyl-L-methionyl-tRNA(fMet) + (6S)-5,6,7,8-tetrahydrofolate + H(+). In terms of biological role, attaches a formyl group to the free amino group of methionyl-tRNA(fMet). The formyl group appears to play a dual role in the initiator identity of N-formylmethionyl-tRNA by promoting its recognition by IF2 and preventing the misappropriation of this tRNA by the elongation apparatus. In Ectopseudomonas mendocina (strain ymp) (Pseudomonas mendocina), this protein is Methionyl-tRNA formyltransferase.